The sequence spans 76 residues: UPF0248 protein MmarC6_0667 (76 aa).

The protein belongs to the UPF0248 family.

This is UPF0248 protein MmarC6_0667 from Methanococcus maripaludis (strain C6 / ATCC BAA-1332).